The primary structure comprises 160 residues: Transcriptional repressor NrdR (160 aa).

A zinc finger lies at 3–34 (CPYCQYEDTQVKDSRPSEEGTVIRRRRICSVC). The 91-residue stretch at 49-139 (LLVLKKSGRY…VYRDFRNASD (91 aa)) folds into the ATP-cone domain.

It belongs to the NrdR family. Zn(2+) is required as a cofactor.

Functionally, negatively regulates transcription of bacterial ribonucleotide reductase nrd genes and operons by binding to NrdR-boxes. In Bartonella henselae (strain ATCC 49882 / DSM 28221 / CCUG 30454 / Houston 1) (Rochalimaea henselae), this protein is Transcriptional repressor NrdR.